The chain runs to 1462 residues: DNA topoisomerase 2 (1462 aa).

Residues asparagine 79, asparagine 108, 136-138 (SSN), and 149-156 (GRNGYGAK) each bind ATP. The segment at 332-334 (NKK) is interaction with DNA. 365-367 (QTK) is an ATP binding site. The 115-residue stretch at 442-556 (CTLILTEGDS…SLLKVPSFLV (115 aa)) folds into the Toprim domain. The Mg(2+) site is built by glutamate 448, aspartate 525, and aspartate 527. Residues 671-1131 (KDFVNKELIL…PTTSLWLKDL (461 aa)) form the Topo IIA-type catalytic domain. Tyrosine 761 acts as the O-(5'-phospho-DNA)-tyrosine intermediate in catalysis. The interaction with DNA stretch occupies residues 947-956 (KLTSTISTSN). Disordered stretches follow at residues 1040-1077 (PMPRKGKSTKPQVAGANDDDSEEQEDAEPETASQSVSV) and 1147-1462 (EDDR…EDDD). Over residues 1056-1068 (NDDDSEEQEDAEP) the composition is skewed to acidic residues. The span at 1167 to 1181 (PAKKPPQPRKNTKKA) shows a compositional bias: basic residues. The span at 1198–1207 (AVEAAKPAEV) shows a compositional bias: low complexity. The span at 1240 to 1250 (IESSGEKSQAM) shows a compositional bias: polar residues. Residues 1260-1275 (AGKKQNNKRGGAKKKS) show a composition bias toward basic residues. The segment covering 1282-1300 (SDSDNEVNDVDDDDDDFEE) has biased composition (acidic residues). Composition is skewed to low complexity over residues 1314–1334 (KPAAQNAKKAPAKAPAKAPAA) and 1419–1430 (APQPARARPQRA). Over residues 1442–1462 (SESEEDSDEDAELSDFEEDDD) the composition is skewed to acidic residues.

Belongs to the type II topoisomerase family. In terms of assembly, homodimer. Requires Mg(2+) as cofactor. It depends on Mn(2+) as a cofactor. Ca(2+) is required as a cofactor. As to expression, abundant in proliferative tissues.

The enzyme catalyses ATP-dependent breakage, passage and rejoining of double-stranded DNA.. Control of topological states of DNA by transient breakage and subsequent rejoining of DNA strands. Topoisomerase II makes double-strand breaks. The sequence is that of DNA topoisomerase 2 (TOP2) from Pisum sativum (Garden pea).